The chain runs to 478 residues: Glutamate--tRNA ligase 1 (478 aa).

The short motif at 10 to 20 (PSPTGFLHIGG) is the 'HIGH' region element. Positions 242–246 (KLSKR) match the 'KMSKS' region motif. K245 is an ATP binding site.

This sequence belongs to the class-I aminoacyl-tRNA synthetase family. Glutamate--tRNA ligase type 1 subfamily. As to quaternary structure, monomer.

It localises to the cytoplasm. It carries out the reaction tRNA(Glu) + L-glutamate + ATP = L-glutamyl-tRNA(Glu) + AMP + diphosphate. In terms of biological role, catalyzes the attachment of glutamate to tRNA(Glu) in a two-step reaction: glutamate is first activated by ATP to form Glu-AMP and then transferred to the acceptor end of tRNA(Glu). This chain is Glutamate--tRNA ligase 1, found in Orientia tsutsugamushi (strain Boryong) (Rickettsia tsutsugamushi).